A 102-amino-acid chain; its full sequence is Protein translation factor SUI1 homolog (102 aa).

It belongs to the SUI1 family.

In Nitrosopumilus maritimus (strain SCM1), this protein is Protein translation factor SUI1 homolog.